We begin with the raw amino-acid sequence, 588 residues long: Ankyrin repeat and SOCS box protein 15 (588 aa).

11 ANK repeats span residues K75 to W104, D110 to T139, K143 to Q172, K176 to L205, F209 to A238, D242 to I271, A275 to I304, S307 to S336, E349 to L378, D379 to C408, and T416 to M444. Residues W524–D579 form the SOCS box domain.

The protein belongs to the ankyrin SOCS box (ASB) family.

The protein operates within protein modification; protein ubiquitination. Functionally, may be a substrate-recognition component of a SCF-like ECS (Elongin-Cullin-SOCS-box protein) E3 ubiquitin-protein ligase complex which mediates the ubiquitination and subsequent proteasomal degradation of target proteins. The sequence is that of Ankyrin repeat and SOCS box protein 15 (ASB15) from Bos taurus (Bovine).